Reading from the N-terminus, the 131-residue chain is Acidic leucine-rich nuclear phosphoprotein 32 family member D (131 aa).

LRR repeat units lie at residues 18–38 (DVKE…EGLT), 43–64 (ELEL…PKLN), 65–87 (KLKK…AEKC), 89–110 (NLIH…EPLK), and 114–131 (NLES…LNNY).

The protein belongs to the ANP32 family.

The protein is Acidic leucine-rich nuclear phosphoprotein 32 family member D (ANP32D) of Homo sapiens (Human).